Consider the following 397-residue polypeptide: Tyrosine aminotransferase (397 aa).

Residues glycine 34, tyrosine 66, tryptophan 131, and asparagine 184 each coordinate substrate. Lysine 247 carries the N6-(pyridoxal phosphate)lysine modification. Residue arginine 375 participates in substrate binding.

The protein belongs to the class-I pyridoxal-phosphate-dependent aminotransferase family. As to quaternary structure, homodimer. The cofactor is pyridoxal 5'-phosphate.

It carries out the reaction L-tyrosine + 2-oxoglutarate = 3-(4-hydroxyphenyl)pyruvate + L-glutamate. The catalysed reaction is 4-methylsulfanyl-2-oxobutanoate + L-tyrosine = 3-(4-hydroxyphenyl)pyruvate + L-methionine. It catalyses the reaction an aromatic L-alpha-amino acid + 2-oxoglutarate = an aromatic oxo-acid + L-glutamate. The enzyme catalyses L-aspartate + 2-oxoglutarate = oxaloacetate + L-glutamate. It participates in amino-acid biosynthesis; L-methionine biosynthesis via salvage pathway; L-methionine from S-methyl-5-thio-alpha-D-ribose 1-phosphate: step 6/6. With respect to regulation, inhibited by malate and nitrotyrosine by approximately 20% at the higher concentration. At 100 uM, canaline and carboxymethoxylamine inhibit aminotransferase activity by 35 and 70%, respectively. Addition of 1.0 mM carboxymethoxylamine lead to a complete inhibition of the aminotransferase activity. Its function is as follows. catalyzes the formation of methionine from 2-keto-4-methylthiobutyrate (KMTB) primarily using aromatic amino acids (tyrosine, phenylalanine and tryptophan) or glutamate as the amino donors. Histidine, leucine, asparagine, or arginine are also functional amino donors but to a lesser extent. Can also use alpha-ketoglutarate, oxaloacetate and pyruvate as the amino acceptors. This chain is Tyrosine aminotransferase (tyrB), found in Klebsiella pneumoniae.